We begin with the raw amino-acid sequence, 145 residues long: Holo-[acyl-carrier-protein] synthase (145 aa).

Mg(2+)-binding residues include D9 and E59.

It belongs to the P-Pant transferase superfamily. AcpS family. Mg(2+) is required as a cofactor.

It localises to the cytoplasm. The catalysed reaction is apo-[ACP] + CoA = holo-[ACP] + adenosine 3',5'-bisphosphate + H(+). Transfers the 4'-phosphopantetheine moiety from coenzyme A to a Ser of acyl-carrier-protein. This is Holo-[acyl-carrier-protein] synthase from Nocardia farcinica (strain IFM 10152).